The chain runs to 141 residues: MLSPRRTKFRKQQRGRMEGLATRGSTLNFGDFALQAQEPAWITSRQIEASRRAMTRYIRRGGQIWIRIFPDKPVTMRPAETRMGSGKGNPEFWVAVVKPGRILFEIGGVSEEIAREAMRLASFKLPIKTKFIVRSQPQEQE.

It belongs to the universal ribosomal protein uL16 family. As to quaternary structure, part of the 50S ribosomal subunit.

Binds 23S rRNA and is also seen to make contacts with the A and possibly P site tRNAs. The chain is Large ribosomal subunit protein uL16 from Nostoc punctiforme (strain ATCC 29133 / PCC 73102).